A 526-amino-acid chain; its full sequence is Bifunctional purine biosynthesis protein PurH (526 aa).

An MGS-like domain is found at 1-147 (MTKIERALIS…KNWAHVAIVT (147 aa)).

The protein belongs to the PurH family.

The enzyme catalyses (6R)-10-formyltetrahydrofolate + 5-amino-1-(5-phospho-beta-D-ribosyl)imidazole-4-carboxamide = 5-formamido-1-(5-phospho-D-ribosyl)imidazole-4-carboxamide + (6S)-5,6,7,8-tetrahydrofolate. It catalyses the reaction IMP + H2O = 5-formamido-1-(5-phospho-D-ribosyl)imidazole-4-carboxamide. The protein operates within purine metabolism; IMP biosynthesis via de novo pathway; 5-formamido-1-(5-phospho-D-ribosyl)imidazole-4-carboxamide from 5-amino-1-(5-phospho-D-ribosyl)imidazole-4-carboxamide (10-formyl THF route): step 1/1. Its pathway is purine metabolism; IMP biosynthesis via de novo pathway; IMP from 5-formamido-1-(5-phospho-D-ribosyl)imidazole-4-carboxamide: step 1/1. The protein is Bifunctional purine biosynthesis protein PurH of Laribacter hongkongensis (strain HLHK9).